The primary structure comprises 209 residues: Large ribosomal subunit protein uL3 (209 aa).

Polar residues predominate over residues 112 to 122 (GTTRGHGTQGN). The tract at residues 112–146 (GTTRGHGTQGNIKRWGQSRGPETHGSRYHRIPGSM) is disordered.

This sequence belongs to the universal ribosomal protein uL3 family. Part of the 50S ribosomal subunit. Forms a cluster with proteins L14 and L19.

One of the primary rRNA binding proteins, it binds directly near the 3'-end of the 23S rRNA, where it nucleates assembly of the 50S subunit. This is Large ribosomal subunit protein uL3 from Lactobacillus gasseri (strain ATCC 33323 / DSM 20243 / BCRC 14619 / CIP 102991 / JCM 1131 / KCTC 3163 / NCIMB 11718 / NCTC 13722 / AM63).